Consider the following 126-residue polypeptide: Large ribosomal subunit protein bL12c (126 aa).

This sequence belongs to the bacterial ribosomal protein bL12 family. In terms of assembly, homodimer. Part of the ribosomal stalk of the 50S ribosomal subunit. Forms a multimeric L10(L12)X complex, where L10 forms an elongated spine to which 2 to 4 L12 dimers bind in a sequential fashion. Binds GTP-bound translation factors.

Its subcellular location is the plastid. The protein resides in the cyanelle. In terms of biological role, forms part of the ribosomal stalk which helps the ribosome interact with GTP-bound translation factors. Is thus essential for accurate translation. This Cyanophora paradoxa protein is Large ribosomal subunit protein bL12c.